An 81-amino-acid polypeptide reads, in one-letter code: Styelin-D (81 aa).

An N-terminal signal peptide occupies residues 1–22; that stretch reads MQMKATILIVLVALFMIQQSEA. Trp24 is modified (6'-bromotryptophan). Arg26 carries the post-translational modification 3,4-dihydroxyarginine. Residues Lys27, Lys30, and Lys34 each carry the 4,5-dihydroxylysine modification. Residues Tyr36 and Tyr37 each carry the 3',4'-dihydroxyphenylalanine modification. At Lys38 the chain carries 4,5-dihydroxylysine. Position 40 is a 5-hydroxylysine (Lys40). Residues Tyr41 and Tyr42 each carry the 3',4'-dihydroxyphenylalanine modification. The residue at position 44 (Lys44) is a 5-hydroxylysine. Leu54 carries the leucine amide modification. Positions 56–81 are cleaved as a propeptide — removed in mature form; the sequence is DMTDEEFQDFMKEVEQAREEELQSRQ.

Post-translationally, contains L-DOPA (3',4'-dihydroxyphenylalanine). In terms of tissue distribution, hemocytes and pharyngeal tissues.

It is found in the secreted. In terms of biological role, bactericidal against several Gram-positive and Gram-negative bacteria. Plays a significant role in the innate immune mechanisms of S.clava. In Styela clava (Sea squirt), this protein is Styelin-D.